A 342-amino-acid chain; its full sequence is S-adenosylmethionine:tRNA ribosyltransferase-isomerase (342 aa).

It belongs to the QueA family. Monomer.

The protein resides in the cytoplasm. It catalyses the reaction 7-aminomethyl-7-carbaguanosine(34) in tRNA + S-adenosyl-L-methionine = epoxyqueuosine(34) in tRNA + adenine + L-methionine + 2 H(+). It participates in tRNA modification; tRNA-queuosine biosynthesis. In terms of biological role, transfers and isomerizes the ribose moiety from AdoMet to the 7-aminomethyl group of 7-deazaguanine (preQ1-tRNA) to give epoxyqueuosine (oQ-tRNA). In Listeria welshimeri serovar 6b (strain ATCC 35897 / DSM 20650 / CCUG 15529 / CIP 8149 / NCTC 11857 / SLCC 5334 / V8), this protein is S-adenosylmethionine:tRNA ribosyltransferase-isomerase.